We begin with the raw amino-acid sequence, 238 residues long: Uridylate kinase (238 aa).

Position 10-13 (10-13) interacts with ATP; sequence KFSG. The involved in allosteric activation by GTP stretch occupies residues 18–23; the sequence is GGNGFG. A UMP-binding site is contributed by Gly-52. ATP-binding residues include Gly-53 and Arg-57. Residues Asp-73 and 134 to 141 each bind UMP; that span reads TGNPFFTT. 3 residues coordinate ATP: Thr-161, Tyr-167, and Asp-170.

Belongs to the UMP kinase family. Homohexamer.

It localises to the cytoplasm. The catalysed reaction is UMP + ATP = UDP + ADP. The protein operates within pyrimidine metabolism; CTP biosynthesis via de novo pathway; UDP from UMP (UMPK route): step 1/1. Allosterically activated by GTP. Inhibited by UTP. Catalyzes the reversible phosphorylation of UMP to UDP. The polypeptide is Uridylate kinase (Campylobacter fetus subsp. fetus (strain 82-40)).